The primary structure comprises 284 residues: RNase adapter protein RapZ (284 aa).

Residue 8-15 (GRSGSGKS) participates in ATP binding. Residue 56 to 59 (DVRN) participates in GTP binding. Residues 266-284 (RSRGKNVQSRHRTLEKRKP) are RNA-binding.

Belongs to the RapZ-like family. RapZ subfamily. In terms of assembly, homotrimer.

Functionally, modulates the synthesis of GlmS, by affecting the processing and stability of the regulatory small RNA GlmZ. When glucosamine-6-phosphate (GlcN6P) concentrations are high in the cell, RapZ binds GlmZ and targets it to cleavage by RNase E. Consequently, GlmZ is inactivated and unable to activate GlmS synthesis. Under low GlcN6P concentrations, RapZ is sequestered and inactivated by an other regulatory small RNA, GlmY, preventing GlmZ degradation and leading to synthesis of GlmS. The polypeptide is RNase adapter protein RapZ (Shigella dysenteriae serotype 1 (strain Sd197)).